A 61-amino-acid chain; its full sequence is Small ribosomal subunit protein uS14 (61 aa).

Over residues 1 to 14 (MAKTSQKVRNHRPA) the composition is skewed to basic residues. Positions 1 to 20 (MAKTSQKVRNHRPAKFSSRE) are disordered. Residues cysteine 24, cysteine 27, cysteine 40, and cysteine 43 each coordinate Zn(2+).

The protein belongs to the universal ribosomal protein uS14 family. Zinc-binding uS14 subfamily. In terms of assembly, part of the 30S ribosomal subunit. Contacts proteins S3 and S10. Requires Zn(2+) as cofactor.

Functionally, binds 16S rRNA, required for the assembly of 30S particles and may also be responsible for determining the conformation of the 16S rRNA at the A site. The chain is Small ribosomal subunit protein uS14 from Lactobacillus delbrueckii subsp. bulgaricus (strain ATCC 11842 / DSM 20081 / BCRC 10696 / JCM 1002 / NBRC 13953 / NCIMB 11778 / NCTC 12712 / WDCM 00102 / Lb 14).